The following is an 829-amino-acid chain: Cadherin-16 (829 aa).

An N-terminal signal peptide occupies residues 1 to 18 (MVPAWLWLLCFSVPQALV). The Extracellular segment spans residues 19-786 (EVSPTTLHVE…MKGMPTKLSA (768 aa)). 6 Cadherin domains span residues 25 to 126 (LHVE…VPQF), 131 to 235 (YSAR…SIVE), 242 to 336 (EPVH…APVC), 341 to 449 (PPVS…APEF), 455 to 564 (GPVS…PPRL), and 569 to 665 (YEAD…APAL). Asn517, Asn602, and Asn722 each carry an N-linked (GlcNAc...) asparagine glycan. Positions 666–786 (PLAPMPSRHL…MKGMPTKLSA (121 aa)) are ectodomain G. Residues 787–807 (VGILVGTLAAIGFFLILIFTH) traverse the membrane as a helical segment. At 808-829 (LALARKKDLDAPADNVPLKAAA) the chain is on the cytoplasmic side.

Kidney specific. Limited to the basolateral membranes of renal tubular epithelial cells.

It localises to the cell membrane. Functionally, cadherins are calcium-dependent cell adhesion proteins. They preferentially interact with themselves in a homophilic manner in connecting cells; cadherins may thus contribute to the sorting of heterogeneous cell types. This Oryctolagus cuniculus (Rabbit) protein is Cadherin-16 (CDH16).